Here is a 210-residue protein sequence, read N- to C-terminus: Protein Nef (210 aa).

The disordered stretch occupies residues Met-1–Val-37. Gly-2 is lipidated: N-myristoyl glycine; by host. The residue at position 6 (Ser-6) is a Phosphoserine; by host. Positions Ile-16 to Pro-29 are enriched in basic and acidic residues. The tract at residues Glu-66 to Glu-69 is acidic; interacts with host PACS1 and PACS2; stabilizes the interaction of NEF/MHC-I with host AP1M1; necessary for MHC-I internalization. An SH3-binding; interaction with Src family tyrosine kinases region spans residues Pro-73 to Pro-82. Positions Pro-76–Pro-79 match the PxxP; stabilizes the interaction of NEF/MHC-I with host AP1M1; necessary for MHC-I internalization motif. Residues Glu-112 to Trp-128 are mediates dimerization, Nef-PTE1 interaction. Residues Val-152–Val-184 are binding to ATP6V1H. Residues Leu-168–Leu-169 carry the Dileucine internalization motif; necessary for CD4 internalization motif. The Diacidic; necessary for CD4 internalization signature appears at Glu-178–Asp-179.

The protein belongs to the lentivirus primate group Nef protein family. In terms of assembly, monomer; cytosolic form. Homodimer; membrane bound form. Interacts with Nef associated p21-activated kinase (PAK2); this interaction activates PAK2. Associates with the Nef-MHC-I-AP1 complex; this complex is required for MHC-I internalization. Interacts (via C-terminus) with host PI3-kinase. Interacts with host PACS1; this interaction seems to be weak. Interacts with host PACS2. Interacts with host LCK and MAPK3; these interactions inhibit the kinase activity of the latter. Interacts with host ATP6V1H; this interaction may play a role in CD4 endocytosis. Associates with the CD4-Nef-AP2 complex; this complex is required for CD4 internalization. Interacts with host AP2 subunit alpha and AP2 subunit sigma2. Interacts with TCR-zeta chain; this interaction up-regulates the Fas ligand (FasL) surface expression. Interacts with host HCK, LYN, and SRC; these interactions activate the Src family kinases. Interacts with MAP3K5; this interaction inhibits the Fas and TNFR-mediated death signals. Interacts with beta-COP and PTE1. Interacts with human RACK1; this increases Nef phosphorylation by PKC. Interacts with TP53; this interaction decreases the half-life of TP53, protecting the infected cell against p53-mediated apoptosis. In terms of processing, the virion-associated Nef proteins are cleaved by the viral protease to release the soluble C-terminal core protein. Nef is probably cleaved concomitantly with viral structural proteins on maturation of virus particles. Post-translationally, myristoylated. Phosphorylated on serine residues, probably by host PKCdelta and theta.

It localises to the host cell membrane. The protein localises to the virion. Its subcellular location is the secreted. The protein resides in the host Golgi apparatus membrane. Functionally, factor of infectivity and pathogenicity, required for optimal virus replication. Alters numerous pathways of T-lymphocyte function and down-regulates immunity surface molecules in order to evade host defense and increase viral infectivity. Alters the functionality of other immunity cells, like dendritic cells, monocytes/macrophages and NK cells. Its function is as follows. In infected CD4(+) T-lymphocytes, down-regulates the surface MHC-I, mature MHC-II, CD4, CD28, CCR5 and CXCR4 molecules. Mediates internalization and degradation of host CD4 through the interaction of with the cytoplasmic tail of CD4, the recruitment of AP-2 (clathrin adapter protein complex 2), internalization through clathrin coated pits, and subsequent transport to endosomes and lysosomes for degradation. Diverts host MHC-I molecules to the trans-Golgi network-associated endosomal compartments by an endocytic pathway to finally target them for degradation. MHC-I down-regulation may involve AP-1 (clathrin adapter protein complex 1) or possibly Src family kinase-ZAP70/Syk-PI3K cascade recruited by PACS2. In consequence infected cells are masked for immune recognition by cytotoxic T-lymphocytes. Decreasing the number of immune receptors also prevents reinfection by more HIV particles (superinfection). Down-regulates host SERINC3 and SERINC5 thereby excluding these proteins from the viral particles. Virion infectivity is drastically higher when SERINC3 or SERINC5 are excluded from the viral envelope, because these host antiviral proteins impair the membrane fusion event necessary for subsequent virion penetration. Bypasses host T-cell signaling by inducing a transcriptional program nearly identical to that of anti-CD3 cell activation. Interaction with TCR-zeta chain up-regulates the Fas ligand (FasL). Increasing surface FasL molecules and decreasing surface MHC-I molecules on infected CD4(+) cells send attacking cytotoxic CD8+ T-lymphocytes into apoptosis. In terms of biological role, plays a role in optimizing the host cell environment for viral replication without causing cell death by apoptosis. Protects the infected cells from apoptosis in order to keep them alive until the next virus generation is ready to strike. Inhibits the Fas and TNFR-mediated death signals by blocking MAP3K5/ASK1. Decreases the half-life of TP53, protecting the infected cell against p53-mediated apoptosis. Inhibits the apoptotic signals regulated by the Bcl-2 family proteins through the formation of a Nef/PI3-kinase/PAK2 complex that leads to activation of PAK2 and induces phosphorylation of host BAD. Functionally, extracellular Nef protein targets CD4(+) T-lymphocytes for apoptosis by interacting with CXCR4 surface receptors. This is Protein Nef from Human immunodeficiency virus type 1 group M subtype B (isolate ARV2/SF2) (HIV-1).